The following is a 316-amino-acid chain: 4-hydroxyphenylacetate decarboxylase activating enzyme (316 aa).

The Radical SAM core domain maps to 20-307 (HDGPGCRTTV…QDIFLDNGIA (288 aa)). Residues cysteine 34, cysteine 38, cysteine 41, cysteine 60, cysteine 66, cysteine 69, and cysteine 105 each contribute to the [4Fe-4S] cluster site. An S-adenosyl-L-methionine-binding site is contributed by 40-42 (WCA). Residues 84 to 115 (NKPVIDWNICKDCESFECVNSCYYNAFKLCAK) enclose the 4Fe-4S ferredoxin-type domain. S-adenosyl-L-methionine is bound by residues glycine 144, 193-195 (DIK), and histidine 267.

This sequence belongs to the organic radical-activating enzymes family. In terms of assembly, monomer. [4Fe-4S] cluster serves as cofactor.

The catalysed reaction is glycyl-[protein] + reduced [flavodoxin] + S-adenosyl-L-methionine = glycin-2-yl radical-[protein] + semiquinone [flavodoxin] + 5'-deoxyadenosine + L-methionine + H(+). Its function is as follows. Catalyzes activation of 4-hydroxyphenylacetate decarboxylase under anaerobic conditions by generation of an organic free radical on a glycine residue, via a homolytic cleavage of S-adenosyl-L-methionine (SAM). The polypeptide is 4-hydroxyphenylacetate decarboxylase activating enzyme (Clostridioides difficile (strain CD196) (Peptoclostridium difficile)).